A 57-amino-acid polypeptide reads, in one-letter code: MAGDFIRVHCDDCENEQVLFGKAANTVNCAVCGSTLATPTGGEADLHGDVVDVVESR.

Positions 10, 13, 29, and 32 each coordinate Zn(2+). The segment at 10-32 (CDDCENEQVLFGKAANTVNCAVC) adopts a C4-type zinc-finger fold.

It belongs to the eukaryotic ribosomal protein eS27 family. Part of the 30S ribosomal subunit. It depends on Zn(2+) as a cofactor.

The protein is Small ribosomal subunit protein eS27 of Natronomonas pharaonis (strain ATCC 35678 / DSM 2160 / CIP 103997 / JCM 8858 / NBRC 14720 / NCIMB 2260 / Gabara) (Halobacterium pharaonis).